Consider the following 234-residue polypeptide: Purine nucleoside phosphorylase DeoD-type (234 aa).

His-4 provides a ligand contact to a purine D-ribonucleoside. Residues Gly-20, Arg-24, Arg-43, and 87-90 (RVGT) each bind phosphate. Residues Glu-162, 178–180 (EME), and 202–203 (SD) each bind a purine D-ribonucleoside. Asp-203 functions as the Proton donor in the catalytic mechanism.

This sequence belongs to the PNP/UDP phosphorylase family. As to quaternary structure, homohexamer; trimer of homodimers.

It catalyses the reaction a purine D-ribonucleoside + phosphate = a purine nucleobase + alpha-D-ribose 1-phosphate. The enzyme catalyses a purine 2'-deoxy-D-ribonucleoside + phosphate = a purine nucleobase + 2-deoxy-alpha-D-ribose 1-phosphate. In terms of biological role, catalyzes the reversible phosphorolytic breakdown of the N-glycosidic bond in the beta-(deoxy)ribonucleoside molecules, with the formation of the corresponding free purine bases and pentose-1-phosphate. This chain is Purine nucleoside phosphorylase DeoD-type, found in Anoxybacillus flavithermus (strain DSM 21510 / WK1).